A 157-amino-acid polypeptide reads, in one-letter code: SsrA-binding protein (157 aa).

It belongs to the SmpB family.

The protein resides in the cytoplasm. Its function is as follows. Required for rescue of stalled ribosomes mediated by trans-translation. Binds to transfer-messenger RNA (tmRNA), required for stable association of tmRNA with ribosomes. tmRNA and SmpB together mimic tRNA shape, replacing the anticodon stem-loop with SmpB. tmRNA is encoded by the ssrA gene; the 2 termini fold to resemble tRNA(Ala) and it encodes a 'tag peptide', a short internal open reading frame. During trans-translation Ala-aminoacylated tmRNA acts like a tRNA, entering the A-site of stalled ribosomes, displacing the stalled mRNA. The ribosome then switches to translate the ORF on the tmRNA; the nascent peptide is terminated with the 'tag peptide' encoded by the tmRNA and targeted for degradation. The ribosome is freed to recommence translation, which seems to be the essential function of trans-translation. The sequence is that of SsrA-binding protein from Limosilactobacillus fermentum (strain NBRC 3956 / LMG 18251) (Lactobacillus fermentum).